Reading from the N-terminus, the 47-residue chain is uncharacterized protein (47 aa).

Positions 19-47 are disordered; the sequence is EKVLKNQNPDRLSHMTDKNAQPKSKEKEE.

This is an uncharacterized protein from Bacillus subtilis (strain 168).